Here is a 473-residue protein sequence, read N- to C-terminus: H(+)/Cl(-) exchange transporter ClcA (473 aa).

Over 1–32 (MKTDNSTFLAQQIVRLRRRDQIRRLMQRDKTP) the chain is Cytoplasmic. A helical transmembrane segment spans residues 33–69 (LAILFMAAVVGTLTGLVGVAFEKAVSWVQNMRIGALV). Residues 70-76 (QVADHAF) lie on the Periplasmic side of the membrane. The helical transmembrane segment at 77 to 100 (LLWPLAFILSALLAMVGYFLVRKF) threads the bilayer. The short motif at 106 to 110 (GSGIP) is the Selectivity filter part_1 element. Ser107 is a chloride binding site. An intramembrane region (helical) is located at residues 109–116 (IPEIEGAL). Residues 117–123 (EELRPVR) lie on the Cytoplasmic side of the membrane. 2 helical membrane passes run 124-141 (WWRV…TLGA) and 148-166 (EGPT…LDVF). The Selectivity filter part_2 motif lies at 146–150 (GREGP). The Cytoplasmic segment spans residues 167-176 (RMRSAEARHT). 2 intramembrane regions (helical) span residues 177-189 (LLAT…LSAA) and 193-201 (PLAGILFII). Topologically, residues 202-214 (EEMRPQFRYNLIS) are cytoplasmic. Residues 215 to 232 (IKAVFTGVIMSSIVFRIF) form a helical membrane-spanning segment. Residues 233–252 (NGEAPIIEVGKLSDAPVNTL) lie on the Periplasmic side of the membrane. A helical transmembrane segment spans residues 253–281 (WLYLILGIIFGCVGPVFNSLVLRTQDMFQ). At 282-287 (RFHGGE) the chain is on the cytoplasmic side. Residues 288–309 (IKKWVLMGGAIGGLCGILGLIE) traverse the membrane as a helical segment. Over 310–329 (PEAAGGGFNLIPIAAAGNFS) the chain is Periplasmic. Transmembrane regions (helical) follow at residues 330-349 (VGLL…LCFS) and 355-376 (GIFA…MAAA). A Selectivity filter part_3 motif is present at residues 355–359 (GIFAP). Chloride contacts are provided by Ile356 and Phe357. Residues 377 to 386 (VLFPQYHLEA) lie on the Periplasmic side of the membrane. Residues 387–401 (GTFAIAGMGALMAAS) constitute an intramembrane region (helical). The segment at residues 402-404 (VRA) is an intramembrane region (note=Loop between two helices). Residues 405 to 416 (PLTGIVLVLEMT) constitute an intramembrane region (helical). The segment at residues 417 to 421 (DNYQL) is an intramembrane region (note=Loop between two helices). Residues 422–438 (ILPMIITCLGATLLAQF) traverse the membrane as a helical segment. Residues 439-473 (LGGKPLYSTILARTLAKQDAEQAAKNQNAPAGENT) are Cytoplasmic-facing. Tyr445 contacts chloride.

This sequence belongs to the chloride channel (TC 2.A.49) family. ClcA subfamily. Homodimer.

The protein resides in the cell inner membrane. It carries out the reaction 2 chloride(in) + H(+)(out) = 2 chloride(out) + H(+)(in). Proton-coupled chloride transporter. Functions as antiport system and exchanges two chloride ions for 1 proton. Probably acts as an electrical shunt for an outwardly-directed proton pump that is linked to amino acid decarboxylation, as part of the extreme acid resistance (XAR) response. The protein is H(+)/Cl(-) exchange transporter ClcA of Salmonella schwarzengrund (strain CVM19633).